We begin with the raw amino-acid sequence, 89 residues long: Small ribosomal subunit protein uS15 (89 aa).

The protein belongs to the universal ribosomal protein uS15 family. Part of the 30S ribosomal subunit. Forms a bridge to the 50S subunit in the 70S ribosome, contacting the 23S rRNA.

One of the primary rRNA binding proteins, it binds directly to 16S rRNA where it helps nucleate assembly of the platform of the 30S subunit by binding and bridging several RNA helices of the 16S rRNA. In terms of biological role, forms an intersubunit bridge (bridge B4) with the 23S rRNA of the 50S subunit in the ribosome. In Vibrio vulnificus (strain YJ016), this protein is Small ribosomal subunit protein uS15.